Here is a 364-residue protein sequence, read N- to C-terminus: Histidinol-phosphate aminotransferase (364 aa).

At Lys226 the chain carries N6-(pyridoxal phosphate)lysine.

Belongs to the class-II pyridoxal-phosphate-dependent aminotransferase family. Histidinol-phosphate aminotransferase subfamily. As to quaternary structure, homodimer. Pyridoxal 5'-phosphate serves as cofactor.

It carries out the reaction L-histidinol phosphate + 2-oxoglutarate = 3-(imidazol-4-yl)-2-oxopropyl phosphate + L-glutamate. It functions in the pathway amino-acid biosynthesis; L-histidine biosynthesis; L-histidine from 5-phospho-alpha-D-ribose 1-diphosphate: step 7/9. This is Histidinol-phosphate aminotransferase from Campylobacter jejuni subsp. jejuni serotype O:2 (strain ATCC 700819 / NCTC 11168).